Consider the following 1171-residue polypeptide: WD repeat-containing protein on Y chromosome (1171 aa).

WD repeat units follow at residues 157–201 (EIPE…LRSA), 331–370 (RIPL…EPSA), 374–413 (GHNG…LLQT), 464–503 (THAA…RKII), 516–555 (IIDI…VVRN), 603–643 (FHTD…RRYN), 748–787 (KVGD…IPQA), and 831–870 (GHLK…LGTL). A disordered region spans residues 1076–1171 (RTSFTLSDYT…TNTMKSSNSH (96 aa)). Polar residues-rich tracts occupy residues 1094-1106 (SSRN…SSGS) and 1161-1171 (KTNTMKSSNSH).

The sequence is that of WD repeat-containing protein on Y chromosome from Drosophila grimshawi (Hawaiian fruit fly).